The chain runs to 89 residues: uncharacterized protein (89 aa).

The first 27 residues, 1–27 (MKKAAAVLLSLGLVFGFSYGAGHVAEA), serve as a signal peptide directing secretion.

This is an uncharacterized protein from Bacillus subtilis (strain 168).